The following is a 786-amino-acid chain: E3 ubiquitin-protein ligase pub3 (786 aa).

One can recognise a C2 domain in the interval 1–109 (MEQGAKRVRF…RSNREVSLTR (109 aa)). 2 disordered regions span residues 134–225 (IRAP…NSNA) and 263–306 (TWTR…DSGN). Residues 142 to 193 (SSTTANRTTSTPTTTTARTTRTTPRPTATTNTSNQSTSNSTRNGTSAATSNG) show a composition bias toward low complexity. The segment covering 204–213 (HRSSPVTNRQ) has biased composition (polar residues). Residues 214–225 (TNNTSALSNSNA) are compositionally biased toward low complexity. Positions 236 to 269 (GRLPPGWERRADSLGRTYYVDHNTRTTTWTRPAS) constitute a WW 1 domain. Composition is skewed to polar residues over residues 263–285 (TWTRPASSTNPVHNTSSDSQRLN) and 295–305 (SNPSLMQSDSG). 2 WW domains span residues 306 to 339 (NDLPFGWEMRYTDTGRPYFVDHNTRTTTWVDPRN) and 364 to 397 (GPLPSGWEMRLTNSARVYFVDHNTKTTTWDDPRL). Residues 453–786 (SAHDLKKRLM…VENTVGFGNE (334 aa)) form the HECT domain. The active-site Glycyl thioester intermediate is Cys-754.

It catalyses the reaction S-ubiquitinyl-[E2 ubiquitin-conjugating enzyme]-L-cysteine + [acceptor protein]-L-lysine = [E2 ubiquitin-conjugating enzyme]-L-cysteine + N(6)-ubiquitinyl-[acceptor protein]-L-lysine.. It participates in protein modification; protein ubiquitination. Its function is as follows. E3 ubiquitin-protein ligase which accepts ubiquitin from an E2 ubiquitin-conjugating enzyme in the form of a thioester and then directly transfers the ubiquitin to targeted substrates. This chain is E3 ubiquitin-protein ligase pub3 (pub3), found in Schizosaccharomyces pombe (strain 972 / ATCC 24843) (Fission yeast).